We begin with the raw amino-acid sequence, 209 residues long: Large ribosomal subunit protein uL3 (209 aa).

An N5-methylglutamine modification is found at Gln150.

It belongs to the universal ribosomal protein uL3 family. In terms of assembly, part of the 50S ribosomal subunit. Forms a cluster with proteins L14 and L19. Post-translationally, methylated by PrmB.

One of the primary rRNA binding proteins, it binds directly near the 3'-end of the 23S rRNA, where it nucleates assembly of the 50S subunit. This chain is Large ribosomal subunit protein uL3, found in Vibrio parahaemolyticus serotype O3:K6 (strain RIMD 2210633).